A 682-amino-acid chain; its full sequence is Actin-binding LIM protein 3 (682 aa).

M1 is modified (N-acetylmethionine). 4 consecutive LIM zinc-binding domains span residues I21–T80, T80–S140, S149–I208, and I208–E268. Phosphoserine occurs at positions 277, 280, 282, 286, 290, 337, 372, and 373. Disordered stretches follow at residues S372 to A426 and Y440 to S475. Y376 is subject to Phosphotyrosine. S379 and S388 each carry phosphoserine. 3 stretches are compositionally biased toward polar residues: residues P380–R393, G405–Q425, and S453–Q466. S492, S502, and S503 each carry phosphoserine. T542 carries the post-translational modification Phosphothreonine. Residues S566, S575, and S606 each carry the phosphoserine modification. Residues M614–F682 form the HP domain. R630 carries the post-translational modification Omega-N-methylarginine.

Directly interacts with F-actin and ABRA. As to expression, expressed in heart, brain, lung and liver. In the brain, highly expressed in the olfactory bulb. In the hippocampus, expressed selectively in the CA2 and CA3 fields. In the cerebellum, expressed in internal granular cells.

Its subcellular location is the cytoplasm. May act as scaffold protein. May stimulate ABRA activity and ABRA-dependent SRF transcriptional activity. This chain is Actin-binding LIM protein 3 (Ablim3), found in Mus musculus (Mouse).